The chain runs to 535 residues: MTPVSEIGTLDVLIFLVFLWLLSKLVGRLVRRGRTTPLRGPANKSLFFGLTRYLNEADDPGAIYESWAAEYGPAFRVPSVLGSHRIMICDAKAIAHFYSRETFGYVQTSLARSAIKNLFGRGLIWSEGESHKRQRKALSPAFSNAAIRRLTSVFFDSSYKMKAAWDSILESNPNNSVIDVQKWMNHISLDSIGIAGFSHDFGSLDGKHSDVAAVFDSFGTSKPSYFSMVIFLLAQVFPILLKLPTNRNLLTNKLRKTMSEIADVLLDRTRKEKEGKMGIVEEKSIIGLLIKAESAETELRMSQEEILAQMNVLLLAGYETTSISLTWALIELSKKPEKQAKLREELLSQFTSTDPTWEQLTSGLPYLDSVVHEVLRLHPPLGETSRVAAEDDIMPLSTPLVTRSGQTVSSIAIGKGTVVGVPIRCMNRSEVLWGKDAKEFIPERWLEPGFGENNEIQGHRHLLTFVDGPRTCLGKGFAIAEFKAALSVLIRSYTFEFPGPNGAVPKIERHRSILPRPKVEGQDGAKVPLRVRRVE.

2 consecutive transmembrane segments (helical) span residues 7–27 (IGTL…KLVG) and 225–245 (YFSM…KLPT). Cys472 contacts heme.

It belongs to the cytochrome P450 family. The cofactor is heme.

Its subcellular location is the membrane. Its pathway is secondary metabolite biosynthesis; terpenoid biosynthesis. In terms of biological role, cytochrome P450 monooxygenase; part of the gene cluster that mediates the biosynthesis of clavilactone A, a meroterpenoid that features a unique benzo-fused ten-membered carbocyclic ring unit with an alpha,beta-epoxy-gamma-lactone moiety, forming an intriguing 10/5/3 tricyclic nested skeleton. Cytochrome P450 monooxygenases claO, claP, claQ, claU, and claW are close orthologs, suggesting that a redundant function or pseudogenes are present in the cla cluster. These monoxygenases are not involved in clavilactone A biosynthesis nor its modification. ClaR, ClaS and ClaT are sufficient to produce clavilactone A. The biosynthesis begins with the prenyltransferase claS that transfers geranyl pyrophosphate (GPP) to hydroquinone to produces geranylhydroquinone. The cytochrome P450 monooxygenase claR then catalyzes the diradical coupling reaction between the intramolecular hydroquinone and allyl moieties to form the benzo-fused ten-membered carbocyclic ring unit of wigantol. Finally the cytochrome P450 monooxygenase claT exquisitely and stereoselectively assembles the alpha,beta-epoxy-gamma-lactone moiety, producing clavilactone A via arnebinol A. This chain is Cytochrome P450 monooxygenase claP, found in Ampulloclitocybe clavipes (Club foot).